The chain runs to 216 residues: Somatotropin (216 aa).

Residues Met1–Ala26 form the signal peptide. His45 serves as a coordination point for Zn(2+). An intrachain disulfide couples Cys78 to Cys189. At Ser131 the chain carries Phosphoserine. A Zn(2+)-binding site is contributed by Glu198. A disulfide bridge connects residues Cys206 and Cys214.

Belongs to the somatotropin/prolactin family.

The protein resides in the secreted. In terms of biological role, plays an important role in growth control. Its major role in stimulating body growth is to stimulate the liver and other tissues to secrete IGF1. It stimulates both the differentiation and proliferation of myoblasts. It also stimulates amino acid uptake and protein synthesis in muscle and other tissues. The sequence is that of Somatotropin (GH1) from Delphinus delphis (Short-beaked common dolphin).